We begin with the raw amino-acid sequence, 683 residues long: U4/U6 small nuclear ribonucleoprotein Prp3 (683 aa).

One can recognise a PWI domain in the interval 1–87 (MALSKRELDE…HSKSSSDRSR (87 aa)). Positions 73-107 (GRSSRHSKSSSDRSRKRDLKEVFGDDSEISKESSG) are enriched in basic and acidic residues. The interval 73-135 (GRSSRHSKSS…IPGPPSESPG (63 aa)) is disordered. A Glycyl lysine isopeptide (Lys-Gly) (interchain with G-Cter in SUMO2) cross-link involves residue K139. The interval 153–183 (IEERKKQLSFISPPTPQPKTPSSSQPERLPI) is disordered. S164 carries the post-translational modification Phosphoserine. T167 is modified (phosphothreonine). Residues K244 and K252 each participate in a glycyl lysine isopeptide (Lys-Gly) (interchain with G-Cter in SUMO2) cross-link. The interval 416–550 (NLVEHPAQLN…VHISVYRVRN (135 aa)) is mediates interaction with SART3. Residue S619 is modified to Phosphoserine.

Component of the precatalytic spliceosome (spliceosome B complex). Component of the U4/U6-U5 tri-snRNP complex, a building block of the precatalytic spliceosome (spliceosome B complex). The U4/U6-U5 tri-snRNP complex is composed of the U4, U6 and U5 snRNAs and at least PRPF3, PRPF4, PRPF6, PRPF8, PRPF31, SNRNP200, TXNL4A, SNRNP40, SNRPB, SNRPD1, SNRPD2, SNRPD3, SNRPE, SNRPF, SNRPG, DDX23, CD2BP2, PPIH, SNU13, EFTUD2, SART1 and USP39, plus LSM2, LSM3, LSM4, LSM5, LSM6, LSM7 and LSM8. Interacts directly with PRPF4. Part of a heteromeric complex containing PPIH, PRPF3 and PRPF4 that is stable in the absence of RNA. Interacts with SART3; the interaction is direct and recruits the deubiquitinase USP4 to PRPF3. Interacts with PRPF19. Interacts ('Lys-63'-linked polyubiquitinated) with PRPF8 (via the MPN (JAB/Mov34) domain); may stabilize the U4/U6-U5 tri-snRNP complex. Interacts with ERCC6. Post-translationally, ubiquitinated. Undergoes 'Lys-63'-linked polyubiquitination by PRPF19 and deubiquitination by USP4. 'Lys-63'-linked ubiquitination increases the affinity for PRPF8 and may regulate the assembly of the U4/U6-U5 tri-snRNP complex.

The protein resides in the nucleus. The protein localises to the nucleus speckle. Its function is as follows. Plays a role in pre-mRNA splicing as component of the U4/U6-U5 tri-snRNP complex that is involved in spliceosome assembly, and as component of the precatalytic spliceosome (spliceosome B complex). This is U4/U6 small nuclear ribonucleoprotein Prp3 (PRPF3) from Bos taurus (Bovine).